Here is a 460-residue protein sequence, read N- to C-terminus: Anthocyanidin 3-O-glucoside 5-O-glucosyltransferase 1 (460 aa).

The signal sequence occupies residues 1–22 (MVRRRVLLATFPAQGHINPALQ). His-16 serves as the catalytic Proton acceptor. His-16 serves as a coordination point for an anthocyanidin. The UDP-alpha-D-glucose site is built by Gln-338, His-353, Trp-356, Asn-357, Ser-358, Glu-361, Asp-377, and Gln-378.

The protein belongs to the UDP-glycosyltransferase family.

It catalyses the reaction an anthocyanidin 3-O-beta-D-glucoside + UDP-alpha-D-glucose = an anthocyanidin 3,5-di-O-beta-D-glucoside + UDP + 2 H(+). It functions in the pathway pigment biosynthesis; anthocyanin biosynthesis. In terms of biological role, catalyzes the glucosylation at the O-5 position of anthocyanidin 3-glucosides to form anthocyanidin 3,5-di-O-glucosides using UDP-glucose as sugar donor. Anthocyanidin 3,5-di-O-glucosides are molecules that are responsible for pigmentation. Also acts on anthocyanidin 3-O-(6-O-malonylglucoside). Much less active with hydroxycinnamoylglucose derivatives. No activity in the absence of the 3-O-glucoside group. This chain is Anthocyanidin 3-O-glucoside 5-O-glucosyltransferase 1 (PF3R4), found in Perilla frutescens (Beefsteak mint).